An 806-amino-acid chain; its full sequence is Centrosomal protein of 85 kDa-like (806 aa).

Disordered regions lie at residues Met1–Asp27, Asn51–Lys89, and His101–Asp146. Ser15 carries the post-translational modification Phosphoserine. Positions Thr60–Asp74 are enriched in polar residues. Residues Asp135–Asp146 are compositionally biased toward basic and acidic residues. The residue at position 207 (Ser207) is a Phosphoserine. Residues Pro308–Pro353 form a disordered region. Polar residues predominate over residues Pro322–Ser351. The stretch at Gln442 to Lys644 forms a coiled coil.

It belongs to the CEP85 family.

It is found in the cytoplasm. Its subcellular location is the cytoskeleton. The protein localises to the microtubule organizing center. The protein resides in the centrosome. In terms of biological role, plays an essential role in neuronal cell migration. The chain is Centrosomal protein of 85 kDa-like from Mus musculus (Mouse).